The primary structure comprises 216 residues: Alanyl-tRNA editing protein AlaX-M (216 aa).

H99, H103, and C182 together coordinate Zn(2+).

It belongs to the class-II aminoacyl-tRNA synthetase family. Editing domain AlaX-M subfamily. In terms of assembly, monomer. It depends on Zn(2+) as a cofactor.

Its subcellular location is the cytoplasm. In terms of biological role, functions in trans to edit the amino acid moiety from mischarged charged Gly-tRNA(Ala) and Ser-tRNA(Ala). This chain is Alanyl-tRNA editing protein AlaX-M (alaXM), found in Pyrococcus horikoshii (strain ATCC 700860 / DSM 12428 / JCM 9974 / NBRC 100139 / OT-3).